Reading from the N-terminus, the 382-residue chain is 2-heptyl-3-hydroxy-4(1H)-quinolone synthase (382 aa).

Belongs to the 3-hydroxybenzoate 6-hydroxylase family.

It catalyses the reaction 2-heptyl-4(1H)-quinolone + NADH + O2 + H(+) = 2-heptyl-3-hydroxy-4(1H)-quinolone + NAD(+) + H2O. Functionally, involved in the terminal step of the biosynthesis of quinolone which in addition to serve as a potent signal for quorum sensing, chelates iron and promotes the formation of membrane vesicles (MVs). Catalyzes the hydroxylation of 2-heptyl-4-quinolone (C7-HHQ) to yield 2-heptyl-3-hydroxy-4-quinolone (PQS). PqsH is also able to hydroxylate HHQ analogs having alkyl side-chain lengths of 3 (C3-HHQ), 5 (C5-HHQ) and 9 (C9-HHQ) carbons, however catalytic efficiencies are significantly reduced for substrates with alkyl side-chain lengths below 7 carbons. The polypeptide is 2-heptyl-3-hydroxy-4(1H)-quinolone synthase (pqsH) (Pseudomonas aeruginosa (strain UCBPP-PA14)).